Here is a 236-residue protein sequence, read N- to C-terminus: Biosynthetic peptidoglycan transglycosylase (236 aa).

The chain crosses the membrane as a helical span at residues 12 to 31 (ALLWFVAGSIVLVLVFRWVP).

This sequence belongs to the glycosyltransferase 51 family.

The protein localises to the cell inner membrane. It catalyses the reaction [GlcNAc-(1-&gt;4)-Mur2Ac(oyl-L-Ala-gamma-D-Glu-L-Lys-D-Ala-D-Ala)](n)-di-trans,octa-cis-undecaprenyl diphosphate + beta-D-GlcNAc-(1-&gt;4)-Mur2Ac(oyl-L-Ala-gamma-D-Glu-L-Lys-D-Ala-D-Ala)-di-trans,octa-cis-undecaprenyl diphosphate = [GlcNAc-(1-&gt;4)-Mur2Ac(oyl-L-Ala-gamma-D-Glu-L-Lys-D-Ala-D-Ala)](n+1)-di-trans,octa-cis-undecaprenyl diphosphate + di-trans,octa-cis-undecaprenyl diphosphate + H(+). Its pathway is cell wall biogenesis; peptidoglycan biosynthesis. Functionally, peptidoglycan polymerase that catalyzes glycan chain elongation from lipid-linked precursors. The sequence is that of Biosynthetic peptidoglycan transglycosylase from Pseudomonas putida (strain ATCC 700007 / DSM 6899 / JCM 31910 / BCRC 17059 / LMG 24140 / F1).